Consider the following 506-residue polypeptide: 2-isopropylmalate synthase (506 aa).

One can recognise a Pyruvate carboxyltransferase domain in the interval 4-266 (ILFMDTTLRD…QSSIILKEIK (263 aa)). Residues D13, H201, H203, and N237 each coordinate Mn(2+). The interval 390–506 (NIKQLQVHFV…KLKALLTLVK (117 aa)) is regulatory domain.

This sequence belongs to the alpha-IPM synthase/homocitrate synthase family. LeuA type 1 subfamily. As to quaternary structure, homodimer. Requires Mn(2+) as cofactor.

Its subcellular location is the cytoplasm. The enzyme catalyses 3-methyl-2-oxobutanoate + acetyl-CoA + H2O = (2S)-2-isopropylmalate + CoA + H(+). Its pathway is amino-acid biosynthesis; L-leucine biosynthesis; L-leucine from 3-methyl-2-oxobutanoate: step 1/4. Functionally, catalyzes the condensation of the acetyl group of acetyl-CoA with 3-methyl-2-oxobutanoate (2-ketoisovalerate) to form 3-carboxy-3-hydroxy-4-methylpentanoate (2-isopropylmalate). The chain is 2-isopropylmalate synthase from Bacillus cytotoxicus (strain DSM 22905 / CIP 110041 / 391-98 / NVH 391-98).